The chain runs to 72 residues: UPF0346 protein GK1571 (72 aa).

Belongs to the UPF0346 family.

This chain is UPF0346 protein GK1571, found in Geobacillus kaustophilus (strain HTA426).